The chain runs to 282 residues: Acetyl-coenzyme A carboxylase carboxyl transferase subunit beta (282 aa).

In terms of domain architecture, CoA carboxyltransferase N-terminal spans 26 to 282 (QWVKCPETGE…IIRLLNLLME (257 aa)).

It belongs to the AccD/PCCB family. Acetyl-CoA carboxylase is a heterohexamer composed of biotin carboxyl carrier protein (AccB), biotin carboxylase (AccC) and two subunits each of ACCase subunit alpha (AccA) and ACCase subunit beta (AccD).

It localises to the cytoplasm. It carries out the reaction N(6)-carboxybiotinyl-L-lysyl-[protein] + acetyl-CoA = N(6)-biotinyl-L-lysyl-[protein] + malonyl-CoA. It participates in lipid metabolism; malonyl-CoA biosynthesis; malonyl-CoA from acetyl-CoA: step 1/1. Its function is as follows. Component of the acetyl coenzyme A carboxylase (ACC) complex. Biotin carboxylase (BC) catalyzes the carboxylation of biotin on its carrier protein (BCCP) and then the CO(2) group is transferred by the transcarboxylase to acetyl-CoA to form malonyl-CoA. This Salinibacter ruber (strain DSM 13855 / M31) protein is Acetyl-coenzyme A carboxylase carboxyl transferase subunit beta.